The sequence spans 85 residues: MEDTLKITAEDLKNYIERIEKLEQEKRDVQDHIRDVYAKAADEGWDIKVMKQIIRLRKMDDDDREEQEILLDTYKRALGMNYEGE.

The protein belongs to the UPF0335 family.

The polypeptide is UPF0335 protein WP0746 (Wolbachia pipientis subsp. Culex pipiens (strain wPip)).